Reading from the N-terminus, the 464-residue chain is DNA repair protein KRE29 (464 aa).

The tract at residues 1–69 is disordered; the sequence is MGSVNSSPNE…SDEEFSSLEN (69 aa). Residues 53–65 show a composition bias toward acidic residues; the sequence is PENDSLNSDEEFS. 2 positions are modified to phosphoserine: Ser-81 and Ser-101.

Component of the Smc5-Smc6 complex which consists of KRE29, MMS21, NSE1, NSE3, NSE4, NSE5, SMC5 and SMC6. Interacts with NSE5.

The protein resides in the nucleus. It is found in the cytoplasm. Functionally, acts in a DNA repair pathway for removal of UV-induced DNA damage that is distinct from classical nucleotide excision repair and in repair of ionizing radiation damage. Functions in homologous recombination repair of DNA double strand breaks and in recovery of stalled replication forks. The polypeptide is DNA repair protein KRE29 (KRE29) (Saccharomyces cerevisiae (strain ATCC 204508 / S288c) (Baker's yeast)).